The primary structure comprises 245 residues: MSGHSKWHNIQGRKNAQDAKRGKIFQKISRDLYQAAKAGGPDPDGNPQLRLEMDKARAANMPKENIKRALDKASGVGGAKFEEITYEGYGPAGTAIMVAALTDNKNRTAAAIRSAFTHHGGSLGAAGSVSYMFDRKGYIVILREDLDTDEDTMLMDALDAGADDMETTDDAFKIYTDPSSVTAVRDALQEKGYSLDTAEARMFPQNTTEVPEAKASQYQGLIDELEDNDDVSDIYEAAVLPEGVE.

Residues 1 to 23 (MSGHSKWHNIQGRKNAQDAKRGK) form a disordered region.

This sequence belongs to the TACO1 family.

The protein resides in the cytoplasm. The protein is Probable transcriptional regulatory protein LVIS_1199 of Levilactobacillus brevis (strain ATCC 367 / BCRC 12310 / CIP 105137 / JCM 1170 / LMG 11437 / NCIMB 947 / NCTC 947) (Lactobacillus brevis).